The chain runs to 401 residues: Chorismate synthase (401 aa).

NADP(+) contacts are provided by arginine 40 and arginine 46. Residues 135–137 (RAS), 256–257 (QA), glycine 300, 315–319 (KPIST), and arginine 341 contribute to the FMN site.

Belongs to the chorismate synthase family. In terms of assembly, homotetramer. FMNH2 serves as cofactor.

The catalysed reaction is 5-O-(1-carboxyvinyl)-3-phosphoshikimate = chorismate + phosphate. Its pathway is metabolic intermediate biosynthesis; chorismate biosynthesis; chorismate from D-erythrose 4-phosphate and phosphoenolpyruvate: step 7/7. In terms of biological role, catalyzes the anti-1,4-elimination of the C-3 phosphate and the C-6 proR hydrogen from 5-enolpyruvylshikimate-3-phosphate (EPSP) to yield chorismate, which is the branch point compound that serves as the starting substrate for the three terminal pathways of aromatic amino acid biosynthesis. This reaction introduces a second double bond into the aromatic ring system. In Mycobacterium bovis (strain BCG / Pasteur 1173P2), this protein is Chorismate synthase.